We begin with the raw amino-acid sequence, 430 residues long: Adenylosuccinate synthetase (430 aa).

GTP-binding positions include glycine 12 to lysine 18 and glycine 40 to threonine 42. Aspartate 13 (proton acceptor) is an active-site residue. Mg(2+)-binding residues include aspartate 13 and glycine 40. Residues aspartate 13 to lysine 16, asparagine 38 to histidine 41, threonine 130, arginine 144, glutamine 224, threonine 239, and arginine 303 each bind IMP. The Proton donor role is filled by histidine 41. Threonine 299–arginine 305 is a substrate binding site. GTP-binding positions include arginine 305, lysine 331–aspartate 333, and serine 413–serine 415.

It belongs to the adenylosuccinate synthetase family. In terms of assembly, homodimer. Mg(2+) is required as a cofactor.

It is found in the cytoplasm. It carries out the reaction IMP + L-aspartate + GTP = N(6)-(1,2-dicarboxyethyl)-AMP + GDP + phosphate + 2 H(+). It participates in purine metabolism; AMP biosynthesis via de novo pathway; AMP from IMP: step 1/2. Functionally, plays an important role in the de novo pathway of purine nucleotide biosynthesis. Catalyzes the first committed step in the biosynthesis of AMP from IMP. The chain is Adenylosuccinate synthetase from Methylorubrum extorquens (strain CM4 / NCIMB 13688) (Methylobacterium extorquens).